The chain runs to 344 residues: Anthranilate phosphoribosyltransferase (344 aa).

5-phospho-alpha-D-ribose 1-diphosphate-binding positions include Gly80, 83–84 (GD), Thr88, 90–93 (NVST), 108–116 (KHGNRSVSS), and Ser120. Anthranilate is bound at residue Gly80. Position 92 (Ser92) interacts with Mg(2+). An anthranilate-binding site is contributed by Asn111. Arg166 is an anthranilate binding site. Residues Asp225 and Glu226 each coordinate Mg(2+).

This sequence belongs to the anthranilate phosphoribosyltransferase family. As to quaternary structure, homodimer. Requires Mg(2+) as cofactor.

The enzyme catalyses N-(5-phospho-beta-D-ribosyl)anthranilate + diphosphate = 5-phospho-alpha-D-ribose 1-diphosphate + anthranilate. It functions in the pathway amino-acid biosynthesis; L-tryptophan biosynthesis; L-tryptophan from chorismate: step 2/5. Its function is as follows. Catalyzes the transfer of the phosphoribosyl group of 5-phosphorylribose-1-pyrophosphate (PRPP) to anthranilate to yield N-(5'-phosphoribosyl)-anthranilate (PRA). In Legionella pneumophila (strain Corby), this protein is Anthranilate phosphoribosyltransferase.